The chain runs to 92 residues: Small ribosomal subunit protein uS19 (92 aa).

This sequence belongs to the universal ribosomal protein uS19 family.

Its function is as follows. Protein S19 forms a complex with S13 that binds strongly to the 16S ribosomal RNA. This chain is Small ribosomal subunit protein uS19, found in Caulobacter sp. (strain K31).